Here is a 374-residue protein sequence, read N- to C-terminus: MVLISEDSRELLQAHVELWNQTYSFMKSVALAVALDLHIADAIHRRGGAATLSQILGEIGVRPCKLPGLHRIMRVLTVSGTFTIVQPSAETMSSESDGREPVYKLTTASSLLVSSESSATASLSPMLNHVLSPFRDSPLSMGLTAWFRHDEDEQAPGMCPFTLMYGTTLWEVCRRDDAINALFNNAMAADSNFLMQILLKEFSEVFLGIDSLVDVAGGVGGATMAIAAAFPCLKCTVLDLPHVVAKAPSSSIGNVQFVGGDMFESIPPANVVLLKWILHDWSNDECIKILKNCKQAIPSRDAGGKIIIIDVVVGSDSSDTKLLETQVIYDLHLMKIGGVERDEQEWKKIFLEAGFKDYKIMPILGLRSIIELYP.

Residues aspartate 239, aspartate 261, methionine 262, and lysine 275 each contribute to the S-adenosyl-L-methionine site. Histidine 279 serves as the catalytic Proton acceptor.

This sequence belongs to the class I-like SAM-binding methyltransferase superfamily. Cation-independent O-methyltransferase family. COMT subfamily. As to quaternary structure, homodimer. In terms of tissue distribution, expressed predominantly in root hairs.

It catalyses the reaction (8Z,11Z)-5-(pentadeca-8,11,14-trien-1-yl)resorcinol + S-adenosyl-L-methionine = (8Z,11Z)-5-(pentadeca- 8,11,14-trien-1-yl)resorcinol-3-methyl ether + S-adenosyl-L-homocysteine + H(+). O-methyltransferase involved in the biosynthetic pathway of the phytotoxin sorgoleone, a potent broad-spectrum inhibitor active against many agronomically important monocot and dicot weed species. Substrate specificity for alkylresorcinols. Strong preference for a five carbons alkyl side chain. This chain is 5-pentadecatrienyl resorcinol O-methyltransferase (OMT3), found in Sorghum bicolor (Sorghum).